Here is a 365-residue protein sequence, read N- to C-terminus: P43 5S RNA-binding protein (365 aa).

9 consecutive C2H2-type zinc fingers follow at residues 15–39 (LRCP…MAGH), 45–69 (WKCG…VKRH), 75–100 (LSCP…LYKH), 106–130 (LKCF…LSVH), 136–160 (SVCD…QKRH), 163–187 (YRCS…VKKH), 191–213 (LQCA…KATH), 220–245 (LPCP…RKLH), and 251–275 (HRCP…LVVH).

The 42S RNP particle comprises four subunits each of which contains one molecule of 5S RNA, three molecules of tRNA, two molecules of p50 (EF1-alpha) and one molecule of the 5S RNA binding protein 43.

Its function is as follows. p43 is a 5S RNA binding protein which is a major constituent of oocytes and comprises part of a 42S ribonucleoprotein storage particle. This Xenopus laevis (African clawed frog) protein is P43 5S RNA-binding protein.